A 630-amino-acid chain; its full sequence is Telomere repeat-binding protein 5 (630 aa).

Disordered regions lie at residues 1 to 38 (MVLQKRPDYGFNGYEVPHTPRAARSPRKSAFKKKSENH), 56 to 78 (EGGNSSSSSNNTSGNNEDQCAVK), and 308 to 327 (YTASQSEETNKNEGQSGSPR). A compositionally biased stretch (low complexity) spans 57–71 (GGNSSSSSNNTSGNN). The span at 309-325 (TASQSEETNKNEGQSGS) shows a compositional bias: polar residues. Residues 354–433 (VKLGIKSFRV…SDTLGFCLEP (80 aa)) form the Ubiquitin-like domain. Residues 463 to 489 (LPSPGKHAKPSNSVESDLDSKPSAPNR) are disordered. The 60-residue stretch at 523-582 (AQRRIRRPFSVAEVEALVQAVERLGTGRWRDVKLRAFDNAKHRTYVDLKDKWKTLVHTAR) folds into the HTH myb-type domain. The segment at residues 551–578 (WRDVKLRAFDNAKHRTYVDLKDKWKTLV) is a DNA-binding region (H-T-H motif).

Homodimer. As to expression, expressed ubiquitously.

It localises to the nucleus. In terms of biological role, binds specifically to the plant telomeric double-stranded DNA sequences. At least 6 repeats of telomeric sequences are required for binding. In Arabidopsis thaliana (Mouse-ear cress), this protein is Telomere repeat-binding protein 5 (TRP5).